The chain runs to 84 residues: N.vectensis toxin 5 (84 aa).

Positions 1 to 21 (MNSLLKVAVVCLVMLVACSSG) are cleaved as a signal peptide. Intrachain disulfides connect C45-C77, C47-C68, and C61-C78.

As to expression, expressed in ectodermal gland cells. In adult female tissues, highly transcribed in mesenteries (gametes-producing tissue) and slightly transcribed in tentacles, pharynx and physa.

Functionally, has toxic effects on zebrafish larvae. It causes contractile paralysis and twitching of the tail within 20 minutes, followed by death within 30 minutes. Does not show any toxicity when injected into arthropods (cherry shrimps or grass shrimps). This is N.vectensis toxin 5 from Nematostella vectensis (Starlet sea anemone).